We begin with the raw amino-acid sequence, 59 residues long: MKFSSIILLTLLICSMSKFGNCQVETNVKCQGGSCASVCRKAIGVAAGKCINGRCVCYP.

A signal peptide spans 1–22 (MKFSSIILLTLLICSMSKFGNC). Pyrrolidone carboxylic acid is present on Q23. 3 cysteine pairs are disulfide-bonded: C30-C50, C35-C55, and C39-C57.

The protein belongs to the short scorpion toxin superfamily. Potassium channel inhibitor family. Alpha-KTx 15 subfamily. Expressed by the venom gland.

It is found in the secreted. Blocks both human ERG1/Kv11.1/KCNH2 potassium channels (in a reversible manner) and A-type voltage-gated potassium channels Kv4/KCND (in an irreversible manner). The presence of the Kv4-associated proteins DPP6 or DPP10 is mandatory to have high-affinity blockade of Kv4.2/KCND2 and Kv4.3/KCND3 channels. In contrast, the presence of the Kv4-associated protein KChIP1/KCNIP1 does not enhance the affinity blockade. May dispose of two functional faces (A and B); the two basic residues (Arg-40 and Lys-41) on the alpha-helix side of the peptide that blocks the hERG current (face A) and the typical dyad through which it blocks A-type currents on the beta-sheet side (face B). In adult rat brain, it binds to sites in the striatum, hippocampus, superior colliculus, and cerebellum. It shares the same target in rat brain than AaTX1 (AC Q867F4) and AmmTX3 (AC P60208). In DPP6 knockout mice, A-type currents are much less affected by the toxin than in wild-type mice. The protein is Potassium channel toxin alpha-KTx 15.2 of Olivierus martensii (Manchurian scorpion).